The following is a 75-amino-acid chain: Small ribosomal subunit protein bS16 (75 aa).

Belongs to the bacterial ribosomal protein bS16 family.

The polypeptide is Small ribosomal subunit protein bS16 (Helicobacter pylori (strain G27)).